A 506-amino-acid polypeptide reads, in one-letter code: Maturase K (506 aa).

Belongs to the intron maturase 2 family. MatK subfamily.

It localises to the plastid. The protein resides in the chloroplast. Its function is as follows. Usually encoded in the trnK tRNA gene intron. Probably assists in splicing its own and other chloroplast group II introns. The chain is Maturase K from Rhododendron hippophaeoides (Rhododendron).